We begin with the raw amino-acid sequence, 182 residues long: Large ribosomal subunit protein uL10 (182 aa).

It belongs to the universal ribosomal protein uL10 family. As to quaternary structure, part of the ribosomal stalk of the 50S ribosomal subunit. The N-terminus interacts with L11 and the large rRNA to form the base of the stalk. The C-terminus forms an elongated spine to which L12 dimers bind in a sequential fashion forming a multimeric L10(L12)X complex.

In terms of biological role, forms part of the ribosomal stalk, playing a central role in the interaction of the ribosome with GTP-bound translation factors. The polypeptide is Large ribosomal subunit protein uL10 (Gluconacetobacter diazotrophicus (strain ATCC 49037 / DSM 5601 / CCUG 37298 / CIP 103539 / LMG 7603 / PAl5)).